We begin with the raw amino-acid sequence, 116 residues long: UPF0102 protein LBJ_1427 (116 aa).

This sequence belongs to the UPF0102 family.

This Leptospira borgpetersenii serovar Hardjo-bovis (strain JB197) protein is UPF0102 protein LBJ_1427.